A 75-amino-acid chain; its full sequence is Mitotic-spindle organizing protein 1 (75 aa).

It belongs to the MOZART1 family. In terms of assembly, part of the gamma-tubulin complex.

It localises to the cytoplasm. The protein localises to the cytoskeleton. It is found in the microtubule organizing center. The protein resides in the centrosome. Its subcellular location is the spindle. In terms of biological role, required for gamma-tubulin complex recruitment to the centrosome. The protein is Mitotic-spindle organizing protein 1 (mzt1) of Danio rerio (Zebrafish).